The primary structure comprises 380 residues: 4-hydroxy-tetrahydrodipicolinate synthase, chloroplastic (380 aa).

Residues 1–44 (MISPTNLLPARKITPVSNGGAATASPSSPSVAARPRRLPSGLQS) are disordered. The transit peptide at 1–54 (MISPTNLLPARKITPVSNGGAATASPSSPSVAARPRRLPSGLQSVTGRGKVSLA) directs the protein to the chloroplast. Low complexity predominate over residues 21–33 (AATASPSSPSVAA). Thr123 lines the pyruvate pocket. Tyr209 acts as the Proton donor/acceptor in catalysis. The active-site Schiff-base intermediate with substrate is Lys237. Ile276 contributes to the pyruvate binding site.

The protein belongs to the DapA family. In terms of assembly, tetramer of modified subunits derived from two genes in different combinations.

The protein resides in the plastid. It localises to the chloroplast. The catalysed reaction is L-aspartate 4-semialdehyde + pyruvate = (2S,4S)-4-hydroxy-2,3,4,5-tetrahydrodipicolinate + H2O + H(+). It functions in the pathway amino-acid biosynthesis; L-lysine biosynthesis via DAP pathway; (S)-tetrahydrodipicolinate from L-aspartate: step 3/4. Sensitive to lysine inhibition. This inhibition increase in an allosteric manner with increasing concentration of the inhibitor. Functionally, catalyzes the condensation of (S)-aspartate-beta-semialdehyde [(S)-ASA] and pyruvate to 4-hydroxy-tetrahydrodipicolinate (HTPA). This Zea mays (Maize) protein is 4-hydroxy-tetrahydrodipicolinate synthase, chloroplastic.